The primary structure comprises 341 residues: Probable 2' cyclic ADP-D-ribose synthase TcpO (341 aa).

Residues 204–336 (KEYDIFVSHS…EIIHEILERI (133 aa)) form the TIR domain. Residues 213-214 (SS) and lysine 243 contribute to the NAD(+) site. Residue glutamate 279 is part of the active site.

The catalysed reaction is NAD(+) + H2O = ADP-D-ribose + nicotinamide + H(+). It catalyses the reaction NAD(+) = 2'cADPR + nicotinamide + H(+). Its function is as follows. NAD(+) hydrolase (NADase) that catalyzes cleavage of NAD(+) into ADP-D-ribose (ADPR) and nicotinamide. In addition to ADPR, also generates a cyclization variant of cyclic ADPR (cADPR), termed v-cADPR (probably 2'cADPR). The chain is Probable 2' cyclic ADP-D-ribose synthase TcpO from Methanobrevibacter olleyae.